The sequence spans 101 residues: Large ribosomal subunit protein bL21 (101 aa).

Belongs to the bacterial ribosomal protein bL21 family. Part of the 50S ribosomal subunit. Contacts protein L20.

Its function is as follows. This protein binds to 23S rRNA in the presence of protein L20. The sequence is that of Large ribosomal subunit protein bL21 from Metamycoplasma arthritidis (strain 158L3-1) (Mycoplasma arthritidis).